Reading from the N-terminus, the 508-residue chain is Protein adenylyltransferase Fic (508 aa).

A helical membrane pass occupies residues 48–70 (FYRFALFFIAGSFAAFSFHALTS). TPR repeat units lie at residues 132-165 (ALGA…APKH) and 166-200 (PEVL…CPSN). An Inhibitory (S/T)XXXE(G/N) motif motif is present at residues 257–262 (SVGIEG). Residues Glu-261 and 342–345 (VGGH) contribute to the ATP site. The region spanning 311-446 (ITIKDILELH…IRPFVRFIAD (136 aa)) is the Fido domain. The active site involves His-389. ATP contacts are provided by residues 393–400 (DGNGRTSR), 425–426 (YY), and Asn-433.

Belongs to the fic family. In terms of assembly, homodimer.

It is found in the membrane. The catalysed reaction is L-tyrosyl-[protein] + ATP = O-(5'-adenylyl)-L-tyrosyl-[protein] + diphosphate. The enzyme catalyses L-threonyl-[protein] + ATP = 3-O-(5'-adenylyl)-L-threonyl-[protein] + diphosphate. It carries out the reaction 3-O-(5'-adenylyl)-L-threonyl-[protein] + H2O = L-threonyl-[protein] + AMP + H(+). Its activity is regulated as follows. The side chain of Glu-261 determines which of the two opposing activities (AMPylase or de-AMPylase) will take place. In response to endoplasmic reticulum stress, mediates de-AMPylase activity. Adenylyltransferase activity is inhibited by the inhibitory helix present at the N-terminus: Glu-261 binds ATP and competes with ATP-binding at Arg-400, thereby preventing adenylyltransferase activity. In unstressed cells, disengagement of Glu-261 promotes adenylyltransferase activity. Activation dissociates ATP-binding from Glu-261, allowing ordered binding of the entire ATP moiety with the alpha-phosphate in an orientation that is productive for accepting an incoming target hydroxyl side chain. Functionally, protein that can both mediate the addition of adenosine 5'-monophosphate (AMP) to specific residues of target proteins (AMPylation), and the removal of the same modification from target proteins (de-AMPylation), depending on the context. The side chain of Glu-261 determines which of the two opposing activities (AMPylase or de-AMPylase) will take place. Acts as a key regulator of the unfolded protein response (UPR) by mediating AMPylation or de-AMPylation of Hsc70-3/BiP. In unstressed cells, acts as an adenylyltransferase by mediating AMPylation of Hsc70-3/BiP at 'Thr-518', thereby inactivating it. In response to endoplasmic reticulum stress, acts as a phosphodiesterase by mediating removal of ATP (de-AMPylation) from Hsc70-3/BiP at 'Thr-518', leading to restore HSPA5/BiP activity. This chain is Protein adenylyltransferase Fic, found in Drosophila persimilis (Fruit fly).